The following is a 99-amino-acid chain: DNA-binding protein Fis (99 aa).

The interval 1-25 (MFEQKISSEALTTTTSIPATGQITQ) is disordered. A DNA-binding region (H-T-H motif) is located at residues 75-94 (QTRAATMLGINRGTLRKKLK).

This sequence belongs to the transcriptional regulatory Fis family. As to quaternary structure, homodimer.

Functionally, activates ribosomal RNA transcription. Plays a direct role in upstream activation of rRNA promoters. The polypeptide is DNA-binding protein Fis (Psychromonas ingrahamii (strain DSM 17664 / CCUG 51855 / 37)).